We begin with the raw amino-acid sequence, 261 residues long: Methylmalonyl-CoA decarboxylase (261 aa).

Substrate-binding positions include 64–68 (AGHDI), G110, T132, and K253.

It belongs to the enoyl-CoA hydratase/isomerase family. Dimer of homotrimers.

The enzyme catalyses (R)-methylmalonyl-CoA + H(+) = propanoyl-CoA + CO2. Functionally, catalyzes the decarboxylation of (R)-methylmalonyl-CoA to propionyl-CoA. Could be part of a pathway that converts succinate to propanoate. The chain is Methylmalonyl-CoA decarboxylase (scpB) from Escherichia coli (strain K12).